We begin with the raw amino-acid sequence, 458 residues long: Tetratricopeptide repeat protein 23-like (458 aa).

2 coiled-coil regions span residues 175 to 198 (GKQAYIHLQKAERNMKELKELNNG) and 246 to 278 (TSELISLYEEIAQIEQLRKNHKQAIQYLQQAYS).

It localises to the cytoplasm. The protein resides in the cytoskeleton. Its subcellular location is the microtubule organizing center. It is found in the centrosome. The protein localises to the spindle. It localises to the midbody. In Mus musculus (Mouse), this protein is Tetratricopeptide repeat protein 23-like (Ttc23l).